The chain runs to 524 residues: MSSIYGLLNFMSATELLLAITVFCLGFWVVRALRTQVPKGLKTPPGPWGLPILGHVLTLGKNPHLSLTKLSKQYGDVLQIRIGSTPVVVLSGLDTIRQALVRQGDDFKGRPDFYSFTLITNGKSMTFNPDCGPVWAARRRLAQDALKSFSIALDPASASSCYLEEYVIKEADYLISKFQKLMAEVGHFDPDRYLVVSVTNVICAMCFGQRYDHDDQELLSIVNLSNEFGKVTGSGYPPDFIPILRYLPNSSLDAFKDLNKKFYSFMQKSVKEHYRTFEKGHIRDITDSLIEHCQDKSLDENANVQLSDDRVINIIVDLFGAGFDTVTTAISWSLMYLVTNPGVQRKIQEELDTVIGRSRRPRLCDRSQLPYLEAFILETFRHSSFLPFTIPHSTTRDTSLCGFYIPKGHCVFVNQWQINHNQELWGDPNKFRPERFLTSSGTLDKVLSGKVTLFGLGKRKCIGETIGRLEVFLFLAILLQQIEFTVSPGEKVDMTPIYGLTLKHARCEYFQAQTRSSGPQHPQA.

The segment at 33 to 44 (LRTQVPKGLKTP) is mitochondrial targeting signal. Ser-71 carries an O-linked (GlcNAc) serine glycan. Phe-228 contributes to the substrate binding site. Cys-461 serves as a coordination point for heme.

The protein belongs to the cytochrome P450 family. As to quaternary structure, interacts with cytosolic chaperones HSP70 and HSP90; this interaction is required for initial targeting to mitochondria. Interacts (via mitochondrial targeting signal) with TOMM40 (via N-terminus); this interaction is required for translocation across the mitochondrial outer membrane. Heme is required as a cofactor.

The protein resides in the endoplasmic reticulum membrane. It is found in the mitochondrion inner membrane. It localises to the microsome membrane. Its subcellular location is the cytoplasm. It catalyses the reaction an organic molecule + reduced [NADPH--hemoprotein reductase] + O2 = an alcohol + oxidized [NADPH--hemoprotein reductase] + H2O + H(+). The enzyme catalyses estrone + reduced [NADPH--hemoprotein reductase] + O2 = 2-hydroxyestrone + oxidized [NADPH--hemoprotein reductase] + H2O + H(+). The catalysed reaction is estrone + reduced [NADPH--hemoprotein reductase] + O2 = 4-hydroxyestrone + oxidized [NADPH--hemoprotein reductase] + H2O + H(+). It carries out the reaction estrone + reduced [NADPH--hemoprotein reductase] + O2 = 6alpha-hydroxyestrone + oxidized [NADPH--hemoprotein reductase] + H2O + H(+). It catalyses the reaction estrone + reduced [NADPH--hemoprotein reductase] + O2 = 15alpha-hydroxyestrone + oxidized [NADPH--hemoprotein reductase] + H2O + H(+). The enzyme catalyses estrone + reduced [NADPH--hemoprotein reductase] + O2 = 16alpha-hydroxyestrone + oxidized [NADPH--hemoprotein reductase] + H2O + H(+). The catalysed reaction is 17beta-estradiol + reduced [NADPH--hemoprotein reductase] + O2 = 2-hydroxy-17beta-estradiol + oxidized [NADPH--hemoprotein reductase] + H2O + H(+). It carries out the reaction 17beta-estradiol + reduced [NADPH--hemoprotein reductase] + O2 = 4-hydroxy-17beta-estradiol + oxidized [NADPH--hemoprotein reductase] + H2O + H(+). It catalyses the reaction 17beta-estradiol + reduced [NADPH--hemoprotein reductase] + O2 = 6alpha-hydroxy-17beta-estradiol + oxidized [NADPH--hemoprotein reductase] + H2O + H(+). The enzyme catalyses 17beta-estradiol + reduced [NADPH--hemoprotein reductase] + O2 = 7alpha-hydroxy-17beta-estradiol + oxidized [NADPH--hemoprotein reductase] + H2O + H(+). The catalysed reaction is 17beta-estradiol + reduced [NADPH--hemoprotein reductase] + O2 = 15alpha-hydroxy-17beta-estradiol + oxidized [NADPH--hemoprotein reductase] + H2O + H(+). It carries out the reaction (5Z,8Z,11Z)-eicosatrienoate + reduced [NADPH--hemoprotein reductase] + O2 = 19-hydroxy-(5Z,8Z,11Z)-eicosatrienoate + oxidized [NADPH--hemoprotein reductase] + H2O + H(+). It catalyses the reaction (5Z,8Z,11Z,14Z)-eicosatetraenoate + reduced [NADPH--hemoprotein reductase] + O2 = 16-hydroxy-(5Z,8Z,11Z,14Z)-eicosatetraenoate + oxidized [NADPH--hemoprotein reductase] + H2O + H(+). The enzyme catalyses (5Z,8Z,11Z,14Z)-eicosatetraenoate + reduced [NADPH--hemoprotein reductase] + O2 = 17-hydroxy-(5Z,8Z,11Z,14Z)-eicosatetraenoate + oxidized [NADPH--hemoprotein reductase] + H2O + H(+). The catalysed reaction is (5Z,8Z,11Z,14Z)-eicosatetraenoate + reduced [NADPH--hemoprotein reductase] + O2 = 18-hydroxy-(5Z,8Z,11Z,14Z)-eicosatetraenoate + oxidized [NADPH--hemoprotein reductase] + H2O + H(+). It carries out the reaction (5Z,8Z,11Z,14Z)-eicosatetraenoate + reduced [NADPH--hemoprotein reductase] + O2 = 19-hydroxy-(5Z,8Z,11Z,14Z)-eicosatetraenoate + oxidized [NADPH--hemoprotein reductase] + H2O + H(+). It catalyses the reaction (5Z,8Z,11Z,14Z,17Z)-eicosapentaenoate + reduced [NADPH--hemoprotein reductase] + O2 = 19-hydroxy-(5Z,8Z,11Z,14Z,17Z)-eicosapentaenoate + oxidized [NADPH--hemoprotein reductase] + H2O + H(+). The enzyme catalyses (5Z,8Z,11Z,14Z)-eicosatetraenoate + reduced [NADPH--hemoprotein reductase] + O2 = (8R,9S)-epoxy-(5Z,11Z,14Z)-eicosatrienoate + oxidized [NADPH--hemoprotein reductase] + H2O + H(+). The catalysed reaction is (5Z,8Z,11Z,14Z)-eicosatetraenoate + reduced [NADPH--hemoprotein reductase] + O2 = (11R,12S)-epoxy-(5Z,8Z,14Z)-eicosatrienoate + oxidized [NADPH--hemoprotein reductase] + H2O + H(+). It carries out the reaction (5Z,8Z,11Z,14Z)-eicosatetraenoate + reduced [NADPH--hemoprotein reductase] + O2 = (14S,15R)-epoxy-(5Z,8Z,11Z)-eicosatrienoate + oxidized [NADPH--hemoprotein reductase] + H2O + H(+). It catalyses the reaction (5Z,8Z,11Z,14Z)-eicosatetraenoate + reduced [NADPH--hemoprotein reductase] + O2 = (14R,15S)-epoxy-(5Z,8Z,11Z)-eicosatrienoate + oxidized [NADPH--hemoprotein reductase] + H2O + H(+). The enzyme catalyses (5Z,8Z,11Z,14Z,17Z)-eicosapentaenoate + reduced [NADPH--hemoprotein reductase] + O2 = (17R,18S)-epoxy-(5Z,8Z,11Z,14Z)-eicosatetraenoate + oxidized [NADPH--hemoprotein reductase] + H2O + H(+). The catalysed reaction is (4Z,7Z,10Z,13Z,16Z,19Z)-docosahexaenoate + reduced [NADPH--hemoprotein reductase] + O2 = (19S,20R)-epoxy-(4Z,7Z,10Z,13Z,16Z)-docosapentaenoate + oxidized [NADPH--hemoprotein reductase] + H2O + H(+). It carries out the reaction (4Z,7Z,10Z,13Z,16Z,19Z)-docosahexaenoate + reduced [NADPH--hemoprotein reductase] + O2 = (19R,20S)-epoxy-(4Z,7Z,10Z,13Z,16Z)-docosapentaenoate + oxidized [NADPH--hemoprotein reductase] + H2O + H(+). It catalyses the reaction all-trans-retinol + reduced [NADPH--hemoprotein reductase] + O2 = all-trans-retinal + oxidized [NADPH--hemoprotein reductase] + 2 H2O + H(+). The enzyme catalyses all-trans-retinal + reduced [NADPH--hemoprotein reductase] + O2 = all-trans-retinoate + oxidized [NADPH--hemoprotein reductase] + H2O + 2 H(+). The catalysed reaction is (13S)-hydroperoxy-(9Z,11E)-octadecadienoate = 13-oxo-(9Z,11E)-octadecadienoate + H2O. It carries out the reaction (12S)-hydroperoxy-(5Z,8Z,10E,14Z)-eicosatetraenoate = 12-oxo-(5Z,8Z,10E,14Z)-eicosatetraenoate + H2O. It catalyses the reaction (15S)-hydroperoxy-(5Z,8Z,11Z,13E)-eicosatetraenoate = 15-oxo-(5Z,8Z,11Z,13E)-eicosatetraenoate + H2O. The enzyme catalyses (5S)-hydroperoxy-(6E,8Z,11Z,14Z)-eicosatetraenoate = 5-oxo-(6E,8Z,11Z,14Z)-eicosatetraenoate + H2O. It participates in steroid hormone biosynthesis. It functions in the pathway lipid metabolism; fatty acid metabolism. Its pathway is cofactor metabolism; retinol metabolism. In terms of biological role, a cytochrome P450 monooxygenase involved in the metabolism of various endogenous substrates, including fatty acids, steroid hormones and vitamins. Mechanistically, uses molecular oxygen inserting one oxygen atom into a substrate, and reducing the second into a water molecule, with two electrons provided by NADPH via cytochrome P450 reductase (CPR; NADPH-ferrihemoprotein reductase). Catalyzes the hydroxylation of carbon-hydrogen bonds. Exhibits high catalytic activity for the formation of hydroxyestrogens from estrone (E1) and 17beta-estradiol (E2), namely 2-hydroxy E1 and E2, as well as D-ring hydroxylated E1 and E2 at the C15alpha and C16alpha positions. Displays different regioselectivities for polyunsaturated fatty acids (PUFA) hydroxylation. Catalyzes the epoxidation of double bonds of certain PUFA. Converts arachidonic acid toward epoxyeicosatrienoic acid (EET) regioisomers, 8,9-, 11,12-, and 14,15-EET, that function as lipid mediators in the vascular system. Displays an absolute stereoselectivity in the epoxidation of eicosapentaenoic acid (EPA) producing the 17(R),18(S) enantiomer. May play an important role in all-trans retinoic acid biosynthesis in extrahepatic tissues. Catalyzes two successive oxidative transformation of all-trans retinol to all-trans retinal and then to the active form all-trans retinoic acid. May also participate in eicosanoids metabolism by converting hydroperoxide species into oxo metabolites (lipoxygenase-like reaction, NADPH-independent). This chain is Cytochrome P450 1A1 (CYP1A1), found in Mesocricetus auratus (Golden hamster).